Consider the following 321-residue polypeptide: uncharacterized protein (321 aa).

A signal peptide spans 1–18; that stretch reads MKKMKKLLLLLSASFAFS.

This is an uncharacterized protein from Aquifex aeolicus (strain VF5).